Here is a 332-residue protein sequence, read N- to C-terminus: Beta-ketoacyl-[acyl-carrier-protein] synthase III (332 aa).

Active-site residues include cysteine 114 and histidine 255. The segment at 256–260 (QANLR) is ACP-binding. The active site involves asparagine 285.

This sequence belongs to the thiolase-like superfamily. FabH family. In terms of assembly, homodimer.

It is found in the cytoplasm. It catalyses the reaction malonyl-[ACP] + acetyl-CoA + H(+) = 3-oxobutanoyl-[ACP] + CO2 + CoA. The protein operates within lipid metabolism; fatty acid biosynthesis. Functionally, catalyzes the condensation reaction of fatty acid synthesis by the addition to an acyl acceptor of two carbons from malonyl-ACP. Catalyzes the first condensation reaction which initiates fatty acid synthesis and may therefore play a role in governing the total rate of fatty acid production. Possesses both acetoacetyl-ACP synthase and acetyl transacylase activities. Its substrate specificity determines the biosynthesis of branched-chain and/or straight-chain of fatty acids. The protein is Beta-ketoacyl-[acyl-carrier-protein] synthase III of Sulfurimonas denitrificans (strain ATCC 33889 / DSM 1251) (Thiomicrospira denitrificans (strain ATCC 33889 / DSM 1251)).